We begin with the raw amino-acid sequence, 661 residues long: Methyl-accepting chemotaxis protein McpA (661 aa).

Residues 1 to 16 (MKKILQLIKQRSITRK) lie on the Cytoplasmic side of the membrane. A helical transmembrane segment spans residues 17 to 37 (LLVSFLSILIIPVVILAIFAY). Residues 38 to 281 (QSASSSLDRQ…IHEAAQPVLH (244 aa)) are Extracellular-facing. The Cache domain occupies 152–228 (ITDPYKTAST…QSGTELKGDW (77 aa)). A helical membrane pass occupies residues 282–302 (LALIVLAAAIIIGIIVMTLII). Residues 303–355 (RSITTPLKQLVGSSKRISEGDLTETIDIRSKDELGELGKSFNNMASSLRSLIH) enclose the HAMP domain. Residues 303 to 661 (RSITTPLKQL…RDMTKRFKIE (359 aa)) lie on the Cytoplasmic side of the membrane. Glu370 carries the post-translational modification Glutamate methyl ester (Glu). The Methyl-accepting transducer domain maps to 374–610 (SAAQTSKATE…EVSGASEHIA (237 aa)). Deamidated glutamine is present on residues Gln593 and Gln594. Glutamate methyl ester (Gln) is present on Gln594. Glu629 and Glu636 each carry glutamate methyl ester (Glu).

This sequence belongs to the methyl-accepting chemotaxis (MCP) protein family. Interacts with FloT. In terms of processing, deamidated by CheD on Gln-593 and Gln-594, producing glutamate residues. The glutamate residues are then methylated. Other additional sites are deamidated and methylated as well.

The protein localises to the cell membrane. Its subcellular location is the membrane raft. Chemotactic-signal transducers respond to changes in the concentration of attractants and repellents in the environment, transduce a signal from the outside to the inside of the cell, and facilitate sensory adaptation through the variation of the level of methylation. All amino acids serve as attractants in B.subtilis, they appear to cause an increase in the turnover methyl groups, leading to methylation of an unidentified acceptor, while repellents have been shown to cause a decrease in methyl group turnover. The methyl groups are added by a methyltransferase and removed by a methylesterase. McpA is required for taxis towards glucose and alpha-methylglucoside. The protein is Methyl-accepting chemotaxis protein McpA (mcpA) of Bacillus subtilis (strain 168).